The following is a 199-amino-acid chain: NAD(P)H dehydrogenase (quinone) (199 aa).

A Flavodoxin-like domain is found at 4–190 (VLVLYYSAYG…GGARYQGKVI (187 aa)). FMN is bound by residues 10–15 (SAYGHI) and 78–80 (TRF). Tyr12 contacts NAD(+). Residue Trp98 participates in substrate binding. FMN-binding positions include 113–119 (STASQHG) and His134.

This sequence belongs to the WrbA family. The cofactor is FMN.

It catalyses the reaction a quinone + NADH + H(+) = a quinol + NAD(+). The catalysed reaction is a quinone + NADPH + H(+) = a quinol + NADP(+). This chain is NAD(P)H dehydrogenase (quinone), found in Rhodopseudomonas palustris (strain BisB18).